The chain runs to 377 residues: Molybdenum import ATP-binding protein ModC (377 aa).

The region spanning Ile-17 to Asp-254 is the ABC transporter domain. Gly-52–Thr-59 contributes to the ATP binding site. The region spanning Asp-313 to Arg-377 is the Mop domain.

This sequence belongs to the ABC transporter superfamily. Molybdate importer (TC 3.A.1.8) family. As to quaternary structure, the complex is composed of two ATP-binding proteins (ModC), two transmembrane proteins (ModB) and a solute-binding protein (ModA).

Its subcellular location is the cell inner membrane. The catalysed reaction is molybdate(out) + ATP + H2O = molybdate(in) + ADP + phosphate + H(+). In terms of biological role, part of the ABC transporter complex ModABC involved in molybdenum import. Responsible for energy coupling to the transport system. This chain is Molybdenum import ATP-binding protein ModC, found in Aromatoleum aromaticum (strain DSM 19018 / LMG 30748 / EbN1) (Azoarcus sp. (strain EbN1)).